Consider the following 362-residue polypeptide: ATPase ARSA2 (362 aa).

27-34 (KGGVGKTT) is an ATP binding site. Residue Asp-58 is part of the active site. Positions 235 and 262 each coordinate ATP.

This sequence belongs to the arsA ATPase family. In terms of assembly, homodimer. Interacts with SEC61B.

It localises to the cytoplasm. It is found in the cytosol. The protein localises to the endoplasmic reticulum. ATPase required for the post-translational delivery of tail-anchored (TA) proteins to the endoplasmic reticulum. Recognizes and selectively binds the transmembrane domain of TA proteins in the cytosol. This complex then targets to the endoplasmic reticulum by membrane-bound receptors, where the tail-anchored protein is released for insertion. This process is regulated by ATP binding and hydrolysis. ATP binding drives the homodimer towards the closed dimer state, facilitating recognition of newly synthesized TA membrane proteins. ATP hydrolysis is required for insertion. Subsequently, the homodimer reverts towards the open dimer state, lowering its affinity for the membrane-bound receptor, and returning it to the cytosol to initiate a new round of targeting. The protein is ATPase ARSA2 of Chlamydomonas reinhardtii (Chlamydomonas smithii).